Reading from the N-terminus, the 148-residue chain is MFQGETAITVDDKGRMAVPTAYRDLVTRVSGNRLVLTYNPFEAGCLWLYAEKEWERVRDDVMSKPNTQRVIRTLQQKLVGSSAVLELDANGRLSIPASHRNAVGIEKKAVLLGMGDKFELWSEQAHRALIQQTLSDGDLGDELLDLRL.

SpoVT-AbrB domains follow at residues 5–53 (ETAI…AEKE) and 82–125 (SAVL…SEQA).

This sequence belongs to the MraZ family. In terms of assembly, forms oligomers.

It is found in the cytoplasm. Its subcellular location is the nucleoid. The sequence is that of Transcriptional regulator MraZ from Xanthomonas oryzae pv. oryzae (strain MAFF 311018).